A 47-amino-acid chain; its full sequence is Heat shock protein HSP 90 (47 aa).

The protein belongs to the heat shock protein 90 family. In terms of assembly, homodimer.

It localises to the cytoplasm. Putative molecular chaperone that may promote the maturation, structural maintenance and proper regulation of specific target proteins. This chain is Heat shock protein HSP 90, found in Oryctolagus cuniculus (Rabbit).